The sequence spans 228 residues: Phosphoglycolate phosphatase (228 aa).

Residue aspartate 9 is the Nucleophile of the active site. Mg(2+)-binding residues include aspartate 9 and aspartate 11. Lysine 151 provides a ligand contact to substrate. The Mg(2+) site is built by aspartate 174 and aspartate 178.

Belongs to the archaeal SPP-like hydrolase family. Requires Mg(2+) as cofactor.

It catalyses the reaction 2-phosphoglycolate + H2O = glycolate + phosphate. Functionally, catalyzes the dephosphorylation of 2-phosphoglycolate. The chain is Phosphoglycolate phosphatase from Pyrobaculum islandicum (strain DSM 4184 / JCM 9189 / GEO3).